The chain runs to 204 residues: Probable dTDP-4-oxo-2,6-dideoxy-D-glucose 3,5-epimerase (204 aa).

Residues arginine 21, glutamate 26, 45–47 (QAN), lysine 70, and histidine 117 each bind substrate. The active-site Proton donor is the tyrosine 130. Glutamate 141 is a substrate binding site. Positions 164 to 204 (VGEGTPTHRPWRRPRRPGILPDYEGVPGALHRGGGRRGTGP) are disordered.

The protein belongs to the dTDP-4-dehydrorhamnose 3,5-epimerase family.

It participates in antibiotic biosynthesis. Involved in the biosynthesis of one of the two 2,6-deoxysugars, dTDP-L-oleandrose, attached to the macrolactone ring oleandolide to produce the aglycone antibiotic oleandomycin. Probably catalyzes the conversion of dTDP-4-keto-2,6-dideoxy-alpha-D-glucose to dTDP-4-keto-2,6-dideoxy-beta-L-galactose. This Streptomyces antibioticus protein is Probable dTDP-4-oxo-2,6-dideoxy-D-glucose 3,5-epimerase.